The primary structure comprises 543 residues: Sodium-dependent lysophosphatidylcholine symporter 1 (543 aa).

A compositionally biased stretch (low complexity) spans 1–14; it reads MAKGEGAESGSAAG. The interval 1-34 is disordered; that stretch reads MAKGEGAESGSAAGLLPTSILQSTERPAQVKKEP. Residues 1-40 are Cytoplasmic-facing; that stretch reads MAKGEGAESGSAAGLLPTSILQSTERPAQVKKEPKKKKQQ. Residues 41–70 form a helical membrane-spanning segment; that stretch reads LSVCNKLCYALGGAPYQVTGCALGFFLQIY. At 71-94 the chain is on the extracellular side; that stretch reads LLDVAQKDEEVVFCFSSFQVGPFS. Residues 95 to 115 traverse the membrane as a helical segment; that stretch reads ASIILFVGRAWDAITDPLVGL. Residues 116-127 are Cytoplasmic-facing; it reads CISKSPWTCLGR. A helical transmembrane segment spans residues 128 to 147; that stretch reads LMPWIIFSTPLAVIAYFLIW. Over 148 to 157 the chain is Extracellular; it reads FVPDFPHGQT. Residues 158 to 182 traverse the membrane as a helical segment; it reads YWYLLFYCLFETMVTCFHVPYSALT. Residues 183-189 are Cytoplasmic-facing; it reads MFISTEQ. Residues 190–221 traverse the membrane as a helical segment; that stretch reads TERDSATAYRMTVEVLGTVLGTAIQGQIVGQA. Topologically, residues 222-241 are extracellular; sequence DTPCFQDLNSSTVASQSANH. Cysteines 225 and 473 form a disulfide. N-linked (GlcNAc...) asparagine glycosylation is found at Asn230 and Asn240. A helical membrane pass occupies residues 242 to 275; that stretch reads THGTTSHRETQKAYLLAAGVIVCIYIICAVILIL. Topologically, residues 276–306 are cytoplasmic; sequence GVREQREPYEAQQSEPIAYFRGLRLVMSHGP. The helical transmembrane segment at 307–333 threads the bilayer; the sequence is YIKLITGFLFTSLAFMLVEGNFVLFCT. The Extracellular portion of the chain corresponds to 334-344; sequence YTLGFRNEFQN. A helical transmembrane segment spans residues 345 to 363; sequence LLLAIMLSATLTIPIWQWF. The Cytoplasmic portion of the chain corresponds to 364 to 367; that stretch reads LTRF. Residues 368 to 389 traverse the membrane as a helical segment; that stretch reads GKKTAVYVGISSAVPFLILVAL. Residues 390–392 are Extracellular-facing; the sequence is MES. Residues 393–429 form a helical membrane-spanning segment; sequence NLIITYAVAVAAGISVAAAFLLPWSMLPDVIDDFHLK. Residues 430-439 are Cytoplasmic-facing; that stretch reads QPHFHGTEPI. Residues 440–466 form a helical membrane-spanning segment; that stretch reads FFSFYVFFTKFASGVSLGISTLSLDFA. Residues 467 to 478 are Extracellular-facing; it reads GYQTRGCSQPER. A helical transmembrane segment spans residues 479-502; sequence VKFTLNMLVTMAPIVLILLGLLLF. Over 503-543 the chain is Cytoplasmic; sequence KMYPIDEERRRQNKKALQALRDEASSSGCSETDSTELASIL.

The protein belongs to the major facilitator superfamily. In terms of assembly, interacts with ERVFRD-1/syncytin-2. In terms of tissue distribution, in placenta, associated with trophoblast cells.

It localises to the cell membrane. It is found in the endoplasmic reticulum membrane. The enzyme catalyses a 1-acyl-sn-glycero-3-phosphocholine(in) + Na(+)(in) = a 1-acyl-sn-glycero-3-phosphocholine(out) + Na(+)(out). It catalyses the reaction 1-(4Z,7Z,10Z,13Z,16Z,19Z-docosahexaenoyl)-sn-glycero-3-phosphocholine(in) + Na(+)(in) = 1-(4Z,7Z,10Z,13Z,16Z,19Z-docosahexaenoyl)-sn-glycero-3-phosphocholine(out) + Na(+)(out). The catalysed reaction is 1-(9Z-octadecenoyl)-sn-glycero-3-phosphocholine(in) + Na(+)(in) = 1-(9Z-octadecenoyl)-sn-glycero-3-phosphocholine(out) + Na(+)(out). It carries out the reaction 1-hexadecanoyl-sn-glycero-3-phosphocholine(in) + Na(+)(in) = 1-hexadecanoyl-sn-glycero-3-phosphocholine(out) + Na(+)(out). The enzyme catalyses a 1-acyl-sn-glycero-3-phosphoethanolamine(in) + Na(+)(in) = a 1-acyl-sn-glycero-3-phosphoethanolamine(out) + Na(+)(out). Functionally, sodium-dependent lysophosphatidylcholine (LPC) symporter, which plays an essential role for blood-brain barrier formation and function. Specifically expressed in endothelium of the blood-brain barrier of micro-vessels and transports LPC into the brain. Transport of LPC is essential because it constitutes the major mechanism by which docosahexaenoic acid (DHA), an omega-3 fatty acid that is essential for normal brain growth and cognitive function, enters the brain. Transports LPC carrying long-chain fatty acids such LPC oleate and LPC palmitate with a minimum acyl chain length of 14 carbons. Does not transport docosahexaenoic acid in unesterified fatty acid. Specifically required for blood-brain barrier formation and function, probably by mediating lipid transport. Not required for central nervous system vascular morphogenesis. Acts as a transporter for tunicamycin, an inhibitor of asparagine-linked glycosylation. In placenta, acts as a receptor for ERVFRD-1/syncytin-2 and is required for trophoblast fusion. The sequence is that of Sodium-dependent lysophosphatidylcholine symporter 1 from Homo sapiens (Human).